A 549-amino-acid chain; its full sequence is Endoplasmic reticulum mannosyl-oligosaccharide 1,2-alpha-mannosidase (549 aa).

At 1–4 (MKNS) the chain is on the cytoplasmic side. A helical; Signal-anchor for type II membrane protein membrane pass occupies residues 5–24 (VGISIATIVAIIAAIYYVPW). The Lumenal segment spans residues 25-354 (YEHFERKSPG…LLASGSTEGL (330 aa)). 3 N-linked (GlcNAc...) asparagine glycosylation sites follow: asparagine 96, asparagine 155, and asparagine 224. The cysteines at positions 340 and 385 are disulfide-linked. The active-site Proton donor is the glutamate 399. A disulfide bridge links cysteine 468 with cysteine 471. Threonine 525 is a binding site for Ca(2+).

This sequence belongs to the glycosyl hydrolase 47 family. As to quaternary structure, homodimer. It depends on Ca(2+) as a cofactor.

The protein resides in the endoplasmic reticulum membrane. It catalyses the reaction N(4)-(alpha-D-Man-(1-&gt;2)-alpha-D-Man-(1-&gt;2)-alpha-D-Man-(1-&gt;3)-[alpha-D-Man-(1-&gt;2)-alpha-D-Man-(1-&gt;3)-[alpha-D-Man-(1-&gt;2)-alpha-D-Man-(1-&gt;6)]-alpha-D-Man-(1-&gt;6)]-beta-D-Man-(1-&gt;4)-beta-D-GlcNAc-(1-&gt;4)-beta-D-GlcNAc)-L-asparaginyl-[protein] (N-glucan mannose isomer 9A1,2,3B1,2,3) + 4 H2O = N(4)-(alpha-D-Man-(1-&gt;3)-[alpha-D-Man-(1-&gt;3)-[alpha-D-Man-(1-&gt;6)]-alpha-D-Man-(1-&gt;6)]-beta-D-Man-(1-&gt;4)-beta-D-GlcNAc-(1-&gt;4)-beta-D-GlcNAc)-L-asparaginyl-[protein] (N-glucan mannose isomer 5A1,2) + 4 beta-D-mannose. It carries out the reaction N(4)-(alpha-D-Man-(1-&gt;2)-alpha-D-Man-(1-&gt;2)-alpha-D-Man-(1-&gt;3)-[alpha-D-Man-(1-&gt;3)-[alpha-D-Man-(1-&gt;2)-alpha-D-Man-(1-&gt;6)]-alpha-D-Man-(1-&gt;6)]-beta-D-Man-(1-&gt;4)-beta-D-GlcNAc-(1-&gt;4)-beta-D-GlcNAc)-L-asparaginyl-[protein] (N-glucan mannose isomer 8A1,2,3B1,3) + 3 H2O = N(4)-(alpha-D-Man-(1-&gt;3)-[alpha-D-Man-(1-&gt;3)-[alpha-D-Man-(1-&gt;6)]-alpha-D-Man-(1-&gt;6)]-beta-D-Man-(1-&gt;4)-beta-D-GlcNAc-(1-&gt;4)-beta-D-GlcNAc)-L-asparaginyl-[protein] (N-glucan mannose isomer 5A1,2) + 3 beta-D-mannose. It participates in protein modification; protein glycosylation. Involved in glycoprotein quality control as it is important for the targeting of misfolded glycoproteins for degradation. It primarily trims a single alpha-1,2-linked mannose residue from Man(9)GlcNAc(2) to produce Man(8)GlcNAc(2), but at high enzyme concentrations it further trims the carbohydrates to Man(5)GlcNAc(2). The polypeptide is Endoplasmic reticulum mannosyl-oligosaccharide 1,2-alpha-mannosidase (MNS1) (Saccharomyces cerevisiae (strain ATCC 204508 / S288c) (Baker's yeast)).